The sequence spans 189 residues: uncharacterized protein (189 aa).

Residues 9–69 (ADTGGRILRA…SMLTSHIADV (61 aa)) enclose the HTH tetR-type domain. The segment at residues 32–51 (TLAEIARRAGVSRPTVYRRW) is a DNA-binding region (H-T-H motif).

This is an uncharacterized protein from Mycobacterium tuberculosis (strain CDC 1551 / Oshkosh).